Reading from the N-terminus, the 372-residue chain is Anhydro-N-acetylmuramic acid kinase (372 aa).

ATP is bound at residue 13–20; that stretch reads GTSMDGID.

It belongs to the anhydro-N-acetylmuramic acid kinase family.

The enzyme catalyses 1,6-anhydro-N-acetyl-beta-muramate + ATP + H2O = N-acetyl-D-muramate 6-phosphate + ADP + H(+). It functions in the pathway amino-sugar metabolism; 1,6-anhydro-N-acetylmuramate degradation. Its pathway is cell wall biogenesis; peptidoglycan recycling. Catalyzes the specific phosphorylation of 1,6-anhydro-N-acetylmuramic acid (anhMurNAc) with the simultaneous cleavage of the 1,6-anhydro ring, generating MurNAc-6-P. Is required for the utilization of anhMurNAc either imported from the medium or derived from its own cell wall murein, and thus plays a role in cell wall recycling. This chain is Anhydro-N-acetylmuramic acid kinase, found in Rhizobium johnstonii (strain DSM 114642 / LMG 32736 / 3841) (Rhizobium leguminosarum bv. viciae).